A 333-amino-acid chain; its full sequence is MIRWGLIGASTIAREWVIGAIRAAGGEVVSVMSSSAERGEAYAAENGIAKAVTSVDDLVGDPDVDAVYISTTNELHHGQALAAIRAGKHVLCEKPLAMNLNDGCEMVLKACEAGVVLGTNHHLRNAATHRAMREAIAAGRIGRPIAARVFHAVYLPPHLQGWRLDKPEAGGGVILDITVHDADTLRFVLNDDPIEAVAISHSAGMGKEGLEDGVMGVLRFRSGVIAQFHDAFTTKFAETGLEVHGTAGSLIGRNVMTQRPVGTVVLRNEEGESELPLDHRNLYETAIAAFHSAIGGNGRPSASGEDGVWSLATGLAVVKAAATGGAVEIETGL.

Residues 9–12, 33–34, R38, 71–76, 93–94, N120, 162–163, and Y283 each bind NADP(+); these read ASTI, SS, TTNELH, EK, and WR.

This sequence belongs to the Gfo/Idh/MocA family. In terms of assembly, monomer.

The enzyme catalyses 1,5-anhydro-D-mannitol + NADP(+) = 1,5-anhydro-D-fructose + NADPH + H(+). Functionally, catalyzes the NADPH-specific reduction of 1,5-anhydro-D-fructose to 1,5-anhydro-D-mannitol. The chain is 1,5-anhydro-D-fructose reductase (afr) from Rhizobium meliloti (strain 1021) (Ensifer meliloti).